The primary structure comprises 570 residues: Sulfite reductase [NADPH] hemoprotein beta-component (570 aa).

Residues C434, C440, C479, and C483 each contribute to the [4Fe-4S] cluster site. Residue C483 coordinates siroheme.

This sequence belongs to the nitrite and sulfite reductase 4Fe-4S domain family. In terms of assembly, alpha(8)-beta(8). The alpha component is a flavoprotein, the beta component is a hemoprotein. It depends on siroheme as a cofactor. [4Fe-4S] cluster serves as cofactor.

It catalyses the reaction hydrogen sulfide + 3 NADP(+) + 3 H2O = sulfite + 3 NADPH + 4 H(+). Its pathway is sulfur metabolism; hydrogen sulfide biosynthesis; hydrogen sulfide from sulfite (NADPH route): step 1/1. Its function is as follows. Component of the sulfite reductase complex that catalyzes the 6-electron reduction of sulfite to sulfide. This is one of several activities required for the biosynthesis of L-cysteine from sulfate. The polypeptide is Sulfite reductase [NADPH] hemoprotein beta-component (Shigella flexneri).